A 1077-amino-acid polypeptide reads, in one-letter code: Teashirt homolog 1-B (1077 aa).

2 disordered regions span residues 1–110 (MPRR…NASY) and 142–179 (NEKASPTTNTDKSSKSEASGPTSDPGTPTTITSSSCTN). Acidic residues predominate over residues 26-36 (TEEDNLEDDGL). A compositionally biased stretch (polar residues) spans 56–69 (TQSYQNSPISSATN). The span at 160–179 (SGPTSDPGTPTTITSSSCTN) shows a compositional bias: low complexity. Residues 248 to 272 (FRCKDCSAAYDTLVELTVHMNETGH) form a C2H2-type 1 zinc finger. The span at 274-286 (RDDNRDREAERTK) shows a compositional bias: basic and acidic residues. Residues 274–300 (RDDNRDREAERTKRWSKPRKRSLMEME) are disordered. The C2H2-type 2 zinc-finger motif lies at 309 to 333 (LKCMYCGHSFESLQDLSVHMIKTKH). The tract at residues 362–394 (ALPDSPEQAGISPGASVSESAKDPKAANPYVTP) is disordered. The C2H2-type 3 zinc-finger motif lies at 418–442 (LKCMECGSSHDTLQQLTAHMMVTGH). Disordered stretches follow at residues 473–530 (PPTT…KIEP) and 849–873 (GRLTPKSSTPSTVSEKSDADGSSFE). Basic and acidic residues predominate over residues 497 to 529 (HSEEKKDPEKEKVNIGEVEKKIKEENEDPEKIE). The span at 853–862 (PKSSTPSTVS) shows a compositional bias: polar residues. Residues 885–955 (RKGRQSNWNP…NVKYQLRRTG (71 aa)) constitute a DNA-binding region (homeobox). 2 C2H2-type zinc fingers span residues 970–992 (FFCNDCASQFRTASTYIGHLETH) and 1037–1060 (FQCKLCNRTFASKHAVKLHLSKTH).

This sequence belongs to the teashirt C2H2-type zinc-finger protein family.

It is found in the nucleus. Its function is as follows. Probable transcriptional regulator involved in developmental processes. May act as a transcriptional repressor (Potential). Involved in two major neuronal regionalization processes: primary anteroposterior (AP) axis patterning of the CNS and segmentation of the cranial neuronal crest (CNS) development. The sequence is that of Teashirt homolog 1-B (tshz1-b) from Xenopus laevis (African clawed frog).